Consider the following 468-residue polypeptide: MAKKVEILVVGDLMLDHYIWGSCDRISPEAPVQVVKIAKETHRLGGAGNVVQNLLALGAKVSVASVVGDDEVGLRIKNMLSELGAGGGLILSEKGRESSIKSRVMASHQQVVRIDKESAVKINLESELVQKVTENLKNFSVVLLSDYGKGVLSDKVCRDIINECVRLDIPVLIDPKGNDYSKYKNATLLTPNRKEASEATGIAIKNTIDLRAAIMKLKNELNLKYSIVTLSEEGIALFDKELEIFPAEAKEVFDVTGAGDTVLATLGFMLASKKDIKEAIKMANLAAAVVVAKIGSATANFGEIEELLRSRANAEFEHKIKSAEQVAEILSQRGEKKVVFTNGCFDILHAGHARYLAKARDFGDILIVGLNSDASVRRLKGESRPINSQLDRACVLSGLGFVDYVVIFDEDTPMELIKKLRPDILVKGADYEGKEVVGSDIVKDVRLVEFVDGKSTSAIVKRIKDADK.

A ribokinase region spans residues 1-315; sequence MAKKVEILVV…ELLRSRANAE (315 aa). 192-195 is a binding site for ATP; that stretch reads NRKE. The active site involves aspartate 260. Residues 340-468 are cytidylyltransferase; it reads FTNGCFDILH…IVKRIKDADK (129 aa).

This sequence in the N-terminal section; belongs to the carbohydrate kinase PfkB family. In the C-terminal section; belongs to the cytidylyltransferase family. As to quaternary structure, homodimer.

It carries out the reaction D-glycero-beta-D-manno-heptose 7-phosphate + ATP = D-glycero-beta-D-manno-heptose 1,7-bisphosphate + ADP + H(+). The enzyme catalyses D-glycero-beta-D-manno-heptose 1-phosphate + ATP + H(+) = ADP-D-glycero-beta-D-manno-heptose + diphosphate. Its pathway is nucleotide-sugar biosynthesis; ADP-L-glycero-beta-D-manno-heptose biosynthesis; ADP-L-glycero-beta-D-manno-heptose from D-glycero-beta-D-manno-heptose 7-phosphate: step 1/4. The protein operates within nucleotide-sugar biosynthesis; ADP-L-glycero-beta-D-manno-heptose biosynthesis; ADP-L-glycero-beta-D-manno-heptose from D-glycero-beta-D-manno-heptose 7-phosphate: step 3/4. Catalyzes the phosphorylation of D-glycero-D-manno-heptose 7-phosphate at the C-1 position to selectively form D-glycero-beta-D-manno-heptose-1,7-bisphosphate. Its function is as follows. Catalyzes the ADP transfer from ATP to D-glycero-beta-D-manno-heptose 1-phosphate, yielding ADP-D-glycero-beta-D-manno-heptose. This Campylobacter curvus (strain 525.92) protein is Bifunctional protein HldE.